The sequence spans 1590 residues: von Willebrand factor D and EGF domain-containing protein (1590 aa).

The signal sequence occupies residues 1–20 (MPGGACVLVIALMFLAWGEA). Asn-367 is a glycosylation site (N-linked (GlcNAc...) asparagine). One can recognise a VWFD domain in the interval 423-606 (AYCYTFTDPH…EWRILPGKSM (184 aa)). 2 disulfide bridges follow: Cys-425-Cys-565 and Cys-468-Cys-477. N-linked (GlcNAc...) asparagine glycosylation is found at Asn-703 and Asn-968. Positions 1177-1216 (TVKSCDCLNGGSCVSDRNFSPGSGVYLCVCLPGFHGSLCE) constitute an EGF-like 1 domain. Cystine bridges form between Cys-1181–Cys-1189, Cys-1183–Cys-1204, and Cys-1206–Cys-1215. The segment covering 1268–1280 (DKSVNKEEDDKNA) has biased composition (basic and acidic residues). The tract at residues 1268–1288 (DKSVNKEEDDKNAQGRKRHVK) is disordered. EGF-like domains follow at residues 1294–1326 (AFTI…SNCQ), 1358–1390 (DEEH…PRCE), 1422–1454 (STAL…EHCQ), 1455–1486 (NAFC…RRFQ), 1518–1550 (NTPI…VRCQ), and 1551–1582 (IPIC…VKCE). 17 disulfide bridges follow: Cys-1298/Cys-1308, Cys-1302/Cys-1314, Cys-1316/Cys-1325, Cys-1362/Cys-1372, Cys-1366/Cys-1378, Cys-1380/Cys-1389, Cys-1426/Cys-1436, Cys-1430/Cys-1442, Cys-1444/Cys-1453, Cys-1458/Cys-1468, Cys-1462/Cys-1474, Cys-1522/Cys-1532, Cys-1526/Cys-1538, Cys-1540/Cys-1549, Cys-1554/Cys-1564, Cys-1558/Cys-1570, and Cys-1572/Cys-1581.

The protein resides in the secreted. The polypeptide is von Willebrand factor D and EGF domain-containing protein (VWDE) (Homo sapiens (Human)).